We begin with the raw amino-acid sequence, 392 residues long: Putative purine permease 19 (392 aa).

A compositionally biased stretch (basic and acidic residues) spans 1–16 (MGFHTKSPDRVTHEEE). The disordered stretch occupies residues 1–29 (MGFHTKSPDRVTHEEEANIGVDNQPRETT). Ser-30 carries the post-translational modification Phosphoserine. The next 10 helical transmembrane spans lie at 46-66 (ICIF…TLLL), 88-108 (WLQS…LLLW), 128-148 (LFLL…LYAI), 154-174 (VFFL…TTII), 182-202 (WIIL…TSSG), 220-240 (WCAF…QLGF), 254-274 (VILM…VGLF), 300-320 (LIGL…LVCL), 325-345 (FSNV…VLAF), and 354-374 (FFKE…VYSL).

Belongs to the purine permeases (TC 2.A.7.14) family.

It localises to the membrane. In Arabidopsis thaliana (Mouse-ear cress), this protein is Putative purine permease 19 (PUP19).